The chain runs to 424 residues: G1/S-specific cyclin-E (424 aa).

Positions 1–25 (MSRRSGRLQSRQDNQPLTECISDEN) are disordered. Polar residues predominate over residues 7-17 (RLQSRQDNQPL). Thr411 carries the phosphothreonine modification.

Belongs to the cyclin family. Cyclin E subfamily. Interacts with a member of the CDK2/CDK protein kinases to form a serine/threonine kinase holoenzyme complex. The cyclin subunit imparts substrate specificity to the complex.

It is found in the nucleus. In terms of biological role, essential for the control of the cell cycle at the G1/S (start) transition. In Hemicentrotus pulcherrimus (Sea urchin), this protein is G1/S-specific cyclin-E (CYCE).